A 57-amino-acid chain; its full sequence is uncharacterized protein (57 aa).

Functionally, proetin of unknown function whose overexpression causes growth inhibition. Overexpression increases the expression of ergosterol synthesis genes. This is an uncharacterized protein from Saccharomyces cerevisiae (strain ATCC 204508 / S288c) (Baker's yeast).